A 40-amino-acid polypeptide reads, in one-letter code: Large ribosomal subunit protein bL36 (40 aa).

The protein belongs to the bacterial ribosomal protein bL36 family.

This is Large ribosomal subunit protein bL36 from Corynebacterium kroppenstedtii (strain DSM 44385 / JCM 11950 / CIP 105744 / CCUG 35717).